A 485-amino-acid chain; its full sequence is Pumilio domain-containing protein 6 (485 aa).

Disordered stretches follow at residues 29–48 (NKTH…PYRH) and 55–76 (SDLD…TPPP). The span at 55–68 (SDLDNYIFNSGSGS) shows a compositional bias: polar residues. 8 Pumilio repeats span residues 86–124 (EVLL…AVFE), 125–163 (KLTE…ELLR), 164–200 (QMID…QLIQ), 201–236 (ELST…TFFV), 237–279 (HFLS…FRIQ), 287–324 (CIVR…TIID), 326–361 (CLLR…EMME), and 372–411 (ELNR…RQLP). Positions 439–454 (FSSGKKIIDSVMRHGV) are RNA-binding.

Functionally, RNA-binding protein that binds to the consensus sequence 5'-CUCUGUAUCUUGU-3' in mRNA 3'-UTRs and modulates mRNA expression and stability. Functions redundantly with puf-5 and puf-7 in oocyte formation and organization, early embryonic cell divisions, and repression of expression of glp-1 and other maternal mRNAs in late oogenesis. This is Pumilio domain-containing protein 6 from Caenorhabditis elegans.